Reading from the N-terminus, the 335-residue chain is GTPase Obg (335 aa).

An Obg domain is found at 4 to 162 (GNFVDYTKIY…ADIVLELKVL (159 aa)). Positions 163 to 332 (ADVGLVGFPN…LKDKLWAMLN (170 aa)) constitute an OBG-type G domain. Residues 169–176 (GFPNAGKS), 194–198 (FTTLK), 216–219 (DIPG), 283–286 (SKCD), and 313–315 (SSI) contribute to the GTP site. Ser176 and Thr196 together coordinate Mg(2+).

Belongs to the TRAFAC class OBG-HflX-like GTPase superfamily. OBG GTPase family. Monomer. The cofactor is Mg(2+).

It localises to the cytoplasm. Its function is as follows. An essential GTPase which binds GTP, GDP and possibly (p)ppGpp with moderate affinity, with high nucleotide exchange rates and a fairly low GTP hydrolysis rate. Plays a role in control of the cell cycle, stress response, ribosome biogenesis and in those bacteria that undergo differentiation, in morphogenesis control. The chain is GTPase Obg from Flavobacterium psychrophilum (strain ATCC 49511 / DSM 21280 / CIP 103535 / JIP02/86).